The primary structure comprises 871 residues: Leucine--tRNA ligase (871 aa).

Residues 42–52 (PYPSGSLHMGH) carry the 'HIGH' region motif. Positions 634–638 (TMSKS) match the 'KMSKS' region motif. Lysine 637 contributes to the ATP binding site.

It belongs to the class-I aminoacyl-tRNA synthetase family.

The protein resides in the cytoplasm. The catalysed reaction is tRNA(Leu) + L-leucine + ATP = L-leucyl-tRNA(Leu) + AMP + diphosphate. This is Leucine--tRNA ligase from Nostoc punctiforme (strain ATCC 29133 / PCC 73102).